The chain runs to 37 residues: Non-specific lipid-transfer protein P4 (37 aa).

It belongs to the plant LTP family.

Its subcellular location is the secreted. Its function is as follows. Plant non-specific lipid-transfer proteins transfer phospholipids as well as galactolipids across membranes. May play a role in wax or cutin deposition in the cell walls of expanding epidermal cells and certain secretory tissues. This is Non-specific lipid-transfer protein P4 from Vitis sp. (Grape).